The primary structure comprises 1280 residues: Dynactin subunit 1 (1280 aa).

Positions 1 to 26 (MAQSKRHMYNRTPSGSRMSTEASARP) are disordered. Residues 11–22 (RTPSGSRMSTEA) are compositionally biased toward polar residues. In terms of domain architecture, CAP-Gly spans 48–90 (GATLFATGKWVGVILDEAKGKNDGTVQGRKYFTCDEGHGIFVR). The disordered stretch occupies residues 99–223 (DGADTTSPET…SKEEEGLRDQ (125 aa)). Residues 102-114 (DTTSPETPDSSAS) show a composition bias toward polar residues. Threonine 108, threonine 145, threonine 146, and threonine 147 each carry phosphothreonine. Residues 129–152 (SKLRGLKPKKAPTARKTTTRRPKP) show a composition bias toward basic residues. The segment covering 161-205 (AGPSSSLGPSGSASAGELSSSEPSTPAQTPLAAPIIPTPALTSPG) has biased composition (low complexity). Serine 179 is modified (phosphoserine; by PLK1). Position 212 is a phosphoserine; by CDK1 (serine 212). The span at 214 to 223 (SKEEEGLRDQ) shows a compositional bias: basic and acidic residues. Coiled-coil stretches lie at residues 214–513 (SKEE…ADYQ) and 942–1048 (LKLE…EGLR). An interaction with HPS6 region spans residues 910–1280 (EYDAERPPSK…LHQLHGRLIS (371 aa)). A disordered region spans residues 1064-1089 (GEEQQRGGTPGQAPGALPGPGPVKDS). Positions 1184–1213 (SAQLMEQVAQLKSLSDTIEKLKDEVLKETV) form a coiled coil.

The protein belongs to the dynactin 150 kDa subunit family. In terms of assembly, monomer and homodimer. Subunit of dynactin, a multiprotein complex part of a tripartite complex with dynein and a adapter, such as BICDL1, BICD2 or HOOK3. The dynactin complex is built around ACTR1A/ACTB filament and consists of an actin-related filament composed of a shoulder domain, a pointed end and a barbed end. Its length is defined by its flexible shoulder domain. The soulder is composed of 2 DCTN1 subunits, 4 DCTN2 and 2 DCTN3. DCTN1/p150(glued) binds directly to microtubules and to cytoplasmic dynein. The 4 DCNT2 (via N-terminus) bind the ACTR1A filament and act as molecular rulers to determine the length. The pointed end is important for binding dynein-dynactin cargo adapters. Consists of 4 subunits: ACTR10, DCNT4, DCTN5 and DCTN6. The barbed end is composed of a CAPZA1:CAPZB heterodimers, which binds ACTR1A/ACTB filament and dynactin and stabilizes dynactin. Interacts with the C-terminus of MAPRE1, MAPRE2 and MAPRE3. Interacts (via C-terminus) with SNX6. Interacts with CLN3, DYNAP, ECPAS and FBXL5. Interacts with MISP; this interaction regulates its distribution at the cell cortex. Interacts with CEP131. Interacts with CEP126. Interacts with CLIP1. Interacts with dynein intermediate chain and dynein heavy chain. Interacts with PLK1 (via POLO-box domain). Interacts with TBCB. Binds preferentially to tyrosinated microtubules than to detyrosinated microtubules. Interacts with PARD6A. Interacts with HPS6. Interacts with KIF3A. Interacts with BICD2. Interacts with DST (isoform 9). Interacts with DST (isoform 1). Identified in a complex with MREG and RILP. Interacts with BCCIP (isoform 2/alpha). Interacts with DCDC1. Interacts with AKNA. Interacts with DYNC1I2. Interacts with RUFY3 and RUFY4. In terms of processing, ubiquitinated by a SCF complex containing FBXL5, leading to its degradation by the proteasome. Phosphorylation by SLK at Thr-145, Thr-146 and Thr-147 targets DCTN1 to the centrosome. It is uncertain if SLK phosphorylates all three threonines or one or two of them. PLK1-mediated phosphorylation at Ser-179 is essential for its localization in the nuclear envelope and promotes its dissociation from microtubules during early mitosis and positively regulates nuclear envelope breakdown during prophase. In terms of tissue distribution, ubiquitous with a high level expression observed in the brain (at protein level).

It localises to the cytoplasm. The protein resides in the cytoskeleton. The protein localises to the microtubule organizing center. It is found in the centrosome. Its subcellular location is the centriole. It localises to the spindle. The protein resides in the nucleus envelope. The protein localises to the cell cortex. In terms of biological role, part of the dynactin complex that activates the molecular motor dynein for ultra-processive transport along microtubules. Plays a key role in dynein-mediated retrograde transport of vesicles and organelles along microtubules by recruiting and tethering dynein to microtubules. Binds to both dynein and microtubules providing a link between specific cargos, microtubules and dynein. Essential for targeting dynein to microtubule plus ends, recruiting dynein to membranous cargos and enhancing dynein processivity (the ability to move along a microtubule for a long distance without falling off the track). Can also act as a brake to slow the dynein motor during motility along the microtubule. Can regulate microtubule stability by promoting microtubule formation, nucleation and polymerization and by inhibiting microtubule catastrophe in neurons. Inhibits microtubule catastrophe by binding both to microtubules and to tubulin, leading to enhanced microtubule stability along the axon. Plays a role in metaphase spindle orientation. Plays a role in centriole cohesion and subdistal appendage organization and function. Its recruitment to the centriole in a KIF3A-dependent manner is essential for the maintenance of centriole cohesion and the formation of subdistal appendage. Also required for microtubule anchoring at the mother centriole. Plays a role in primary cilia formation. The chain is Dynactin subunit 1 (Dctn1) from Rattus norvegicus (Rat).